The primary structure comprises 79 residues: Suppressor of tumorigenicity 20 protein (79 aa).

As to expression, expressed in leukocytes, lung, spleen, liver, heart, kidney, muscle and uterine cervix. Down-regulated in cervical cancer.

Functionally, may act as a tumor suppressor. Promotes apoptosis of cancer cells. The chain is Suppressor of tumorigenicity 20 protein (ST20) from Homo sapiens (Human).